We begin with the raw amino-acid sequence, 722 residues long: Serine/threonine-protein kinase MARK2 (722 aa).

The segment at 1 to 46 (MSSARTPLPTLNERDTEQPTLGHLDSKPSSKSNMLRGRNSATSADE) is disordered. Polar residues predominate over residues 27–45 (KPSSKSNMLRGRNSATSAD). Phosphoserine is present on Ser40. The region spanning 53-304 (YRLLKTIGKG…LEQIMKDRWM (252 aa)) is the Protein kinase domain. Residue Thr58 is modified to Phosphothreonine; by autocatalysis. Residues 59 to 67 (IGKGNFAKV) and Lys82 each bind ATP. Phosphoserine; by CaMK1 is present on residues Ser91, Ser92, and Ser93. Asp175 serves as the catalytic Proton acceptor. At Thr208 the chain carries Phosphothreonine; by LKB1 and TAOK1. Position 212 is a phosphoserine; by GSK3-beta (Ser212). Residue Ser274 is modified to Phosphoserine; by autocatalysis. Thr275 bears the Phosphothreonine; by autocatalysis mark. Position 294 is a phosphothreonine; by CaMK1 (Thr294). In terms of domain architecture, UBA spans 323-362 (YKDPRRTELMVSMGYTREEIQDSLVGQRYNEVMATYLLLG). Residues 373–576 (ITLKPRPSAD…SQGRRGASGS (204 aa)) form a disordered region. Phosphoserine is present on residues Ser408 and Ser409. Polar residues predominate over residues 417-431 (PTSNSYSKKTQSNNA). Over residues 432 to 442 (ENKRPEEETGR) the composition is skewed to basic and acidic residues. Ser453 carries the post-translational modification Phosphoserine. Thr464 is modified (phosphothreonine). Positions 464–483 (TPTPSTNSVLSTSTNRSRNS) are enriched in polar residues. 2 positions are modified to phosphoserine: Ser483 and Ser490. Polar residues predominate over residues 492–505 (GQASIQNGKDSTAP). The span at 511–524 (ASPSAHNISSSSGA) shows a compositional bias: low complexity. Residues Ser512, Ser514, and Ser535 each carry the phosphoserine modification. Thr539 is subject to Phosphothreonine; by PKC/PRKCZ. Phosphoserine occurs at positions 562 and 656. In terms of domain architecture, KA1 spans 673-722 (TPGHENFVQWEMEVCKLPRLSLNGVRFKRISGTSMAFKNIASKIANELKL).

It belongs to the protein kinase superfamily. CAMK Ser/Thr protein kinase family. SNF1 subfamily. In terms of assembly, homodimer. Interacts (when phosphorylated at Thr-539) with YWHAZ. Interacts with MTCL1; the interaction is direct and increases MARK2 microtubule-binding ability. Interacts with PAK5; leading to inhibit the protein kinase activity. Interacts with MAPT/TAU. Interacts with YWHAB, YWHAG and YWHAQ. Mg(2+) serves as cofactor. In terms of processing, autophosphorylated. Phosphorylated at Thr-208 by STK11/LKB1 in complex with STE20-related adapter-alpha (STRADA) pseudo kinase and CAB39. Phosphorylation at Thr-208 by TAOK1 activates the kinase activity, leading to phosphorylation and detachment of MAPT/TAU from microtubules. Phosphorylation at Ser-212 by GSK3-beta (GSK3B) inhibits the kinase activity. Phosphorylation by CaMK1 promotes activity and is required to promote neurite outgrowth. Phosphorylation at Thr-539 by PRKCZ/aPKC in polarized epithelial cells inhibits the kinase activity and promotes binding to 14-3-3 protein YWHAZ, leading to relocation from cell membrane to cytoplasm.

Its subcellular location is the cell membrane. It is found in the lateral cell membrane. The protein localises to the cytoplasm. The protein resides in the cytoskeleton. It localises to the cell projection. Its subcellular location is the dendrite. It carries out the reaction L-seryl-[protein] + ATP = O-phospho-L-seryl-[protein] + ADP + H(+). It catalyses the reaction L-threonyl-[protein] + ATP = O-phospho-L-threonyl-[protein] + ADP + H(+). The enzyme catalyses L-seryl-[tau protein] + ATP = O-phospho-L-seryl-[tau protein] + ADP + H(+). The catalysed reaction is L-threonyl-[tau protein] + ATP = O-phospho-L-threonyl-[tau protein] + ADP + H(+). Its activity is regulated as follows. Inhibited by hymenialdisine. Activated by phosphorylation on Thr-208 by STK11/LKB1 and TAOK1. Inhibited by phosphorylation at Ser-212 or Thr-539. Inhibited by PAK5; inhibition is independent of the kinase activity of PAK5. Serine/threonine-protein kinase. Involved in cell polarity and microtubule dynamics regulation. Phosphorylates CRTC2/TORC2, DCX, HDAC7, KIF13B, MAP2, MAP4 and RAB11FIP2. Phosphorylates the microtubule-associated protein MAPT/TAU. Plays a key role in cell polarity by phosphorylating the microtubule-associated proteins MAP2, MAP4 and MAPT/TAU at KXGS motifs, causing detachment from microtubules, and their disassembly. Regulates epithelial cell polarity by phosphorylating RAB11FIP2. Involved in the regulation of neuronal migration through its dual activities in regulating cellular polarity and microtubule dynamics, possibly by phosphorylating and regulating DCX. Regulates axogenesis by phosphorylating KIF13B, promoting interaction between KIF13B and 14-3-3 and inhibiting microtubule-dependent accumulation of KIF13B. Also required for neurite outgrowth and establishment of neuronal polarity. Regulates localization and activity of some histone deacetylases by mediating phosphorylation of HDAC7, promoting subsequent interaction between HDAC7 and 14-3-3 and export from the nucleus. Also acts as a positive regulator of the Wnt signaling pathway, probably by mediating phosphorylation of dishevelled proteins (DVL1, DVL2 and/or DVL3). Modulates the developmental decision to build a columnar versus a hepatic epithelial cell apparently by promoting a switch from a direct to a transcytotic mode of apical protein delivery. Essential for the asymmetric development of membrane domains of polarized epithelial cells. The chain is Serine/threonine-protein kinase MARK2 from Rattus norvegicus (Rat).